The chain runs to 208 residues: MTIRVLGIDPGLTRCGVGVVDVRRDRRATLVEVTVIRTPAEMPLEQRLLAVGDGIAALLDRYSPAAVAIERVFAQHNLRTVIGVAQVSGVALHTAAQRGLPVALHTPSEVKAAITGYGSADKKQVQAMVARVLGLPEAPKPADAADALAIAICHAWRGGLAALSTSGAVGAAGPAAVPGAALTPAQAAWRAAERSTARTSSAPRRLAR.

Residues aspartate 9, glutamate 70, and aspartate 143 contribute to the active site. Residues aspartate 9, glutamate 70, and aspartate 143 each coordinate Mg(2+).

It belongs to the RuvC family. In terms of assembly, homodimer which binds Holliday junction (HJ) DNA. The HJ becomes 2-fold symmetrical on binding to RuvC with unstacked arms; it has a different conformation from HJ DNA in complex with RuvA. In the full resolvosome a probable DNA-RuvA(4)-RuvB(12)-RuvC(2) complex forms which resolves the HJ. Requires Mg(2+) as cofactor.

The protein localises to the cytoplasm. The catalysed reaction is Endonucleolytic cleavage at a junction such as a reciprocal single-stranded crossover between two homologous DNA duplexes (Holliday junction).. In terms of biological role, the RuvA-RuvB-RuvC complex processes Holliday junction (HJ) DNA during genetic recombination and DNA repair. Endonuclease that resolves HJ intermediates. Cleaves cruciform DNA by making single-stranded nicks across the HJ at symmetrical positions within the homologous arms, yielding a 5'-phosphate and a 3'-hydroxyl group; requires a central core of homology in the junction. The consensus cleavage sequence is 5'-(A/T)TT(C/G)-3'. Cleavage occurs on the 3'-side of the TT dinucleotide at the point of strand exchange. HJ branch migration catalyzed by RuvA-RuvB allows RuvC to scan DNA until it finds its consensus sequence, where it cleaves and resolves the cruciform DNA. This chain is Crossover junction endodeoxyribonuclease RuvC, found in Leifsonia xyli subsp. xyli (strain CTCB07).